Reading from the N-terminus, the 135-residue chain is ATP synthase epsilon chain (135 aa).

Basic and acidic residues predominate over residues 90-103; the sequence is DVRRAESAKERAES. A disordered region spans residues 90 to 115; it reads DVRRAESAKERAESHLNNNDEDTDIN.

It belongs to the ATPase epsilon chain family. F-type ATPases have 2 components, CF(1) - the catalytic core - and CF(0) - the membrane proton channel. CF(1) has five subunits: alpha(3), beta(3), gamma(1), delta(1), epsilon(1). CF(0) has three main subunits: a, b and c.

The protein localises to the cell membrane. In terms of biological role, produces ATP from ADP in the presence of a proton gradient across the membrane. The polypeptide is ATP synthase epsilon chain (Staphylococcus carnosus (strain TM300)).